A 218-amino-acid polypeptide reads, in one-letter code: Adapter protein MecA (218 aa).

Belongs to the MecA family. As to quaternary structure, homodimer.

Enables the recognition and targeting of unfolded and aggregated proteins to the ClpC protease or to other proteins involved in proteolysis. The polypeptide is Adapter protein MecA (Exiguobacterium sp. (strain ATCC BAA-1283 / AT1b)).